The following is a 350-amino-acid chain: Small-conductance mechanosensitive channel MscMJ (350 aa).

5 helical membrane passes run 10 to 30, 59 to 79, 91 to 111, 130 to 150, and 154 to 174; these read ISNI…GKIV, LPII…FLIL, VKVV…DGIF, IIKP…ILTA, and VGYD…ALAL.

The protein belongs to the MscS (TC 1.A.23) family.

It is found in the cell membrane. In terms of biological role, small-conductance mechanosensitive channel that opens in response to stretch forces in the membrane lipid bilayer. Exhibits a sixfold preference for cations over anions. Non-rectifying. The protein is Small-conductance mechanosensitive channel MscMJ of Methanocaldococcus jannaschii (strain ATCC 43067 / DSM 2661 / JAL-1 / JCM 10045 / NBRC 100440) (Methanococcus jannaschii).